A 254-amino-acid chain; its full sequence is Low affinity immunoglobulin gamma Fc region receptor III-A (254 aa).

The signal sequence occupies residues 1-16 (MWQLLLPTALLLLVSA). Topologically, residues 17-208 (GMRAEDLPKA…ISSFFPPGYQ (192 aa)) are extracellular. Ig-like C2-type domains follow at residues 24 to 105 (PKAV…LEVH) and 107 to 189 (GWLL…VNIT). Cystine bridges form between C47–C89 and C128–C172. N56, N63, and N82 each carry an N-linked (GlcNAc...) asparagine glycan. 2 N-linked (GlcNAc...) asparagine glycosylation sites follow: N180 and N187. Residues 209–229 (VSFCLVMVLLFAVDTGLYFSM) traverse the membrane as a helical segment. Topologically, residues 230 to 254 (KKSIPSSTRDWEDHKFKWSKDPQDK) are cytoplasmic.

As to quaternary structure, forms a heterooligomeric complex with ITAM-containing signaling subunits, either a homodimer of CD247, a homodimer of FCER1G or a heterodimer of CD247 and FCER1G. Interacts (via transmembrane domain) with signaling subunits; this interaction is a prerequisite for receptor complex expression on the cell surface and intracellular signal transduction. Binds the Fc region of antigen-complexed IgG with a preference for IgG1 and IgG3 isotypes. Interacts with CD2; this interaction is involved in NK cell activation and cytotoxicity. Interacts with S100A4; this interaction inhibits PKC-dependent phosphorylation of FCGR3A. Post-translationally, glycosylated. Glycosylation plays an inhibitory role in the interaction with IgG1 and IgG2. Undergoes rapid ectodomain shedding upon NK cell stimulation. The soluble form is produced by a proteolytic cleavage mediated by ADAM17. Repeated stimulation causes receptor shedding, a mechanism that allows for increased NK cell motility and detachment from opsonized target cells while avoiding activation-induced NK cell apoptosis. In terms of tissue distribution, lymphocytes and monocytes.

It localises to the cell membrane. The protein resides in the secreted. In terms of biological role, receptor for the invariable Fc fragment of immunoglobulin gamma (IgG). Optimally activated upon binding of clustered antigen-IgG complexes displayed on cell surfaces, triggers lysis of antibody-coated cells, a process known as antibody-dependent cellular cytotoxicity (ADCC). Does not bind free monomeric IgG, thus avoiding inappropriate effector cell activation in the absence of antigenic trigger. Mediates IgG effector functions on natural killer (NK) cells. Binds antigen-IgG complexes generated upon infection and triggers NK cell-dependent cytokine production and degranulation to limit viral load and propagation. Involved in the generation of memory-like adaptive NK cells capable to produce high amounts of IFNG and to efficiently eliminate virus-infected cells via ADCC. Regulates NK cell survival and proliferation, in particular by preventing NK cell progenitor apoptosis. Fc-binding subunit that associates with CD247 and/or FCER1G adapters to form functional signaling complexes. Following the engagement of antigen-IgG complexes, triggers phosphorylation of immunoreceptor tyrosine-based activation motif (ITAM)-containing adapters with subsequent activation of phosphatidylinositol 3-kinase signaling and sustained elevation of intracellular calcium that ultimately drive NK cell activation. The ITAM-dependent signaling coupled to receptor phosphorylation by PKC mediates robust intracellular calcium flux that leads to production of pro-inflammatory cytokines, whereas in the absence of receptor phosphorylation it mainly activates phosphatidylinositol 3-kinase signaling leading to cell degranulation. Costimulates NK cells and trigger lysis of target cells independently of IgG binding. Mediates the antitumor activities of therapeutic antibodies. Upon ligation on monocytes triggers TNFA-dependent ADCC of IgG-coated tumor cells. Mediates enhanced ADCC in response to afucosylated IgGs. The chain is Low affinity immunoglobulin gamma Fc region receptor III-A (FCGR3A) from Macaca fascicularis (Crab-eating macaque).